The chain runs to 329 residues: MMSSSSSEIDVVKTRIPTYDEDDNTVLYAYETKPEFVNKEPNIVSDVSCNTEEQQKTVNDVLIHCQVIYDAMQNLDKKIDVIRRKVSKIQRFYVKSLWTNRKRYGYKKYSYRLAKKLKLKKMKKNEVYESFSYPESYSPTLPVSRCENNSPSNFPRPSFCMEEYRRAEPEEDPILSRTPSPVHPSDFSEHNYQPYYASDGATYGSSSGTCRGNPRADGIHNTYSTDHASAAPPSVARSPFENDRYIEEGSITKHPSTWSVEAVVLFLKQTDPLALCPLIDLFRSHEIDGKALLLLTSDVLLKHLGVKLGTAVKLCYYIDRLKQGKCFEN.

Phosphoserine is present on residues S138 and S238. One can recognise an SAM domain in the interval 258-325 (WSVEAVVLFL…YYIDRLKQGK (68 aa)).

Belongs to the SCM family.

It is found in the nucleus. In terms of biological role, putative Polycomb group (PcG) protein. PcG proteins act by forming multiprotein complexes, which are required to maintain the transcriptionally repressive state of homeotic genes throughout development. May be involved in spermatogenesis during sexual maturation. In Hoolock hoolock (Western hoolock gibbon), this protein is Sex comb on midleg-like protein 1 (SCML1).